Consider the following 396-residue polypeptide: Elongation factor Tu (396 aa).

In terms of domain architecture, tr-type G spans 11 to 205 (KPHVNIGTIG…VVDEYIPTPE (195 aa)). The segment at 20–27 (GHVDHGKT) is G1. 20-27 (GHVDHGKT) serves as a coordination point for GTP. Residue Thr27 participates in Mg(2+) binding. The G2 stretch occupies residues 61–65 (GITIN). The tract at residues 82-85 (DAPG) is G3. GTP-binding positions include 82 to 86 (DAPGH) and 137 to 140 (NKCD). The segment at 137–140 (NKCD) is G4. A G5 region spans residues 175-177 (SAL).

This sequence belongs to the TRAFAC class translation factor GTPase superfamily. Classic translation factor GTPase family. EF-Tu/EF-1A subfamily. As to quaternary structure, monomer.

Its subcellular location is the cytoplasm. The catalysed reaction is GTP + H2O = GDP + phosphate + H(+). Its function is as follows. GTP hydrolase that promotes the GTP-dependent binding of aminoacyl-tRNA to the A-site of ribosomes during protein biosynthesis. In Lactobacillus delbrueckii subsp. bulgaricus (strain ATCC 11842 / DSM 20081 / BCRC 10696 / JCM 1002 / NBRC 13953 / NCIMB 11778 / NCTC 12712 / WDCM 00102 / Lb 14), this protein is Elongation factor Tu.